The primary structure comprises 276 residues: Undecaprenyl-diphosphatase (276 aa).

Transmembrane regions (helical) follow at residues 1–21, 41–61, 97–117, 121–141, 155–175, 200–220, 231–251, and 256–276; these read MHWLEVVLLGVIQGLTEFLPV, LLLDICLHVGTLAAVLWVFFA, ALLIIIGTIPTGFIGMGFHKI, LFASPVLAGAMLLITGALLWA, VTWGNALTVGTIQGLAILPGI, FLLSIPAIVAALILEVADASA, LGGIVSAFTGLAALKWLLAIV, and LWWFAPYCWLVGATVLVANFV.

Belongs to the UppP family.

Its subcellular location is the cell inner membrane. The catalysed reaction is di-trans,octa-cis-undecaprenyl diphosphate + H2O = di-trans,octa-cis-undecaprenyl phosphate + phosphate + H(+). Functionally, catalyzes the dephosphorylation of undecaprenyl diphosphate (UPP). Confers resistance to bacitracin. This Desulfatibacillum aliphaticivorans protein is Undecaprenyl-diphosphatase.